The following is a 451-amino-acid chain: Glutamyl-tRNA reductase (451 aa).

Substrate contacts are provided by residues 49 to 52 (TCNR), Ser109, 114 to 116 (EQQ), and Gln120. Cys50 (nucleophile) is an active-site residue. Residue 190–195 (GAGAMG) coordinates NADP(+).

The protein belongs to the glutamyl-tRNA reductase family. Homodimer.

The catalysed reaction is (S)-4-amino-5-oxopentanoate + tRNA(Glu) + NADP(+) = L-glutamyl-tRNA(Glu) + NADPH + H(+). Its pathway is porphyrin-containing compound metabolism; protoporphyrin-IX biosynthesis; 5-aminolevulinate from L-glutamyl-tRNA(Glu): step 1/2. In terms of biological role, catalyzes the NADPH-dependent reduction of glutamyl-tRNA(Glu) to glutamate 1-semialdehyde (GSA). This Mycolicibacterium smegmatis (strain ATCC 700084 / mc(2)155) (Mycobacterium smegmatis) protein is Glutamyl-tRNA reductase.